The following is a 734-amino-acid chain: Photosystem I P700 chlorophyll a apoprotein A2 (734 aa).

Helical transmembrane passes span isoleucine 46–alanine 69, leucine 135–glutamine 158, leucine 175–isoleucine 199, methionine 273–tyrosine 291, leucine 330–tyrosine 353, alanine 369–isoleucine 395, alanine 417–histidine 439, and phenylalanine 517–valine 535. [4Fe-4S] cluster is bound by residues cysteine 559 and cysteine 568. A run of 2 helical transmembrane segments spans residues alanine 575–tryptophan 596 and leucine 643–isoleucine 665. Positions 654, 662, and 670 each coordinate chlorophyll a. Residue tryptophan 671 coordinates phylloquinone. A helical membrane pass occupies residues leucine 707–alanine 727.

Belongs to the PsaA/PsaB family. As to quaternary structure, the PsaA/B heterodimer binds the P700 chlorophyll special pair and subsequent electron acceptors. PSI consists of a core antenna complex that captures photons, and an electron transfer chain that converts photonic excitation into a charge separation. The eukaryotic PSI reaction center is composed of at least 11 subunits. The cofactor is P700 is a chlorophyll a/chlorophyll a' dimer, A0 is one or more chlorophyll a, A1 is one or both phylloquinones and FX is a shared 4Fe-4S iron-sulfur center..

It localises to the plastid. The protein localises to the chloroplast thylakoid membrane. The enzyme catalyses reduced [plastocyanin] + hnu + oxidized [2Fe-2S]-[ferredoxin] = oxidized [plastocyanin] + reduced [2Fe-2S]-[ferredoxin]. Functionally, psaA and PsaB bind P700, the primary electron donor of photosystem I (PSI), as well as the electron acceptors A0, A1 and FX. PSI is a plastocyanin-ferredoxin oxidoreductase, converting photonic excitation into a charge separation, which transfers an electron from the donor P700 chlorophyll pair to the spectroscopically characterized acceptors A0, A1, FX, FA and FB in turn. Oxidized P700 is reduced on the lumenal side of the thylakoid membrane by plastocyanin. The chain is Photosystem I P700 chlorophyll a apoprotein A2 from Spinacia oleracea (Spinach).